A 558-amino-acid polypeptide reads, in one-letter code: DALR anticodon-binding domain-containing protein 3 (558 aa).

Residues 213–240 (KALENSAYRDRETEKGKRRSRGEEIEGE) form a disordered region.

The sequence is that of DALR anticodon-binding domain-containing protein 3 (dalrd3) from Danio rerio (Zebrafish).